A 347-amino-acid polypeptide reads, in one-letter code: MELRTVWWENDAVCLIDQRKLPHTMEVVRCTDLAAVAYAIRSMQVRGAPAIGCTAAYGMALVAQQSVALTPSALLTELVQAKATLDSQRPTAVNLAWATSRMLRRAEAVASEGVEAIKHALHAEAEAIFAEDLAMCHAIGEHGASLIPPRGHVLTHCNAGGLATAGYGTALAPIRTAFAQGRPVHVFVDETRPFLQGARLTAWELLQAGIPQTLITDNMAAFMMQRGQIDCVIVGADRIAANGDVANKIGTYGLAVLARYHNIPFYVAAPSSTIDLATASGADIPIEERDPAEVTHIAGVAIAPQGVRAAHPAFDVTPNELVTAIITERGIVRPPYLAALRQLESGR.

Residues 46 to 48 (RGA), Arg-89, and Gln-196 contribute to the substrate site. The active-site Proton donor is the Asp-237. 247-248 (NK) is a substrate binding site.

Belongs to the eIF-2B alpha/beta/delta subunits family. MtnA subfamily.

The catalysed reaction is 5-(methylsulfanyl)-alpha-D-ribose 1-phosphate = 5-(methylsulfanyl)-D-ribulose 1-phosphate. It functions in the pathway amino-acid biosynthesis; L-methionine biosynthesis via salvage pathway; L-methionine from S-methyl-5-thio-alpha-D-ribose 1-phosphate: step 1/6. Functionally, catalyzes the interconversion of methylthioribose-1-phosphate (MTR-1-P) into methylthioribulose-1-phosphate (MTRu-1-P). The polypeptide is Methylthioribose-1-phosphate isomerase (Chloroflexus aurantiacus (strain ATCC 29366 / DSM 635 / J-10-fl)).